Consider the following 60-residue polypeptide: Large ribosomal subunit protein uL30 (60 aa).

This sequence belongs to the universal ribosomal protein uL30 family. As to quaternary structure, part of the 50S ribosomal subunit.

In Finegoldia magna (strain ATCC 29328 / DSM 20472 / WAL 2508) (Peptostreptococcus magnus), this protein is Large ribosomal subunit protein uL30.